The sequence spans 487 residues: MEKSWFNLMFSKGELEYRGELSKAMDSFAPSEKTTLSQDRFIYDMDKNFYGWGERSSYSTNVDLLVSSKDIRNFISDDTFFVRDGNKNSYSIYFDIKKKKFEIDNDLSDLEFFFYSYCSSSYLNNRLKGDNDLHYDPYIKDTKYNCTNHINSCIDSYFRSHICIDSNFLSDSNNSNESYIYNFICSESGKIRESKNYKIRTNRNRSNLMSSKDFDITQNYNQLWIQCDNCYGLMYKKVKMNVCEQCGHYLKMSSSERIELSIDPGTWNPMDEDMVSADPIKFHSREEPYKNRIDSAQKTTGLTDAVQTGTGQLNGIPVALGVMDFKFLGGSMGSVVGEKITRLIEYATNQRLPLILVCSSGGARMQEGSLSLMQMAKISSVLCDYQSSKKLFYISILTSPTTGGVTASFGMLGDIIIAEPYAYIAFAGKRVIEQTLKKAVPEGSQAAESLLRKGLLDAIVPRNPLKGVLSELFQLHAFFPLKKNEIK.

One can recognise a CoA carboxyltransferase N-terminal domain in the interval 223–487; the sequence is LWIQCDNCYG…FFPLKKNEIK (265 aa). Positions 227, 230, 243, and 246 each coordinate Zn(2+). A C4-type zinc finger spans residues 227–246; that stretch reads CDNCYGLMYKKVKMNVCEQC.

The protein belongs to the AccD/PCCB family. As to quaternary structure, acetyl-CoA carboxylase is a heterohexamer composed of biotin carboxyl carrier protein, biotin carboxylase and 2 subunits each of ACCase subunit alpha and ACCase plastid-coded subunit beta (accD). Requires Zn(2+) as cofactor.

It localises to the plastid. The protein localises to the chloroplast stroma. The enzyme catalyses N(6)-carboxybiotinyl-L-lysyl-[protein] + acetyl-CoA = N(6)-biotinyl-L-lysyl-[protein] + malonyl-CoA. It participates in lipid metabolism; malonyl-CoA biosynthesis; malonyl-CoA from acetyl-CoA: step 1/1. Functionally, component of the acetyl coenzyme A carboxylase (ACC) complex. Biotin carboxylase (BC) catalyzes the carboxylation of biotin on its carrier protein (BCCP) and then the CO(2) group is transferred by the transcarboxylase to acetyl-CoA to form malonyl-CoA. This chain is Acetyl-coenzyme A carboxylase carboxyl transferase subunit beta, chloroplastic, found in Lepidium virginicum (Virginia pepperweed).